Reading from the N-terminus, the 841-residue chain is Translation initiation factor IF-2 (841 aa).

Positions 87 to 254 are disordered; it reads RKKKVFVQRS…KRNAHGFQSP (168 aa). Over residues 96-135 the composition is skewed to basic and acidic residues; that stretch reads SPEEIEAERKREMDERRAVENAARQKAEEEAKRRAEEDAR. Residues 136–175 are compositionally biased toward low complexity; that stretch reads SQPAASQSAPAAAEPVAAAEPVREAAPAAAPAPASAAPSA. 2 stretches are compositionally biased toward basic and acidic residues: residues 176-217 and 225-234; these read DARK…EKAP and TTDEESDSFR. Residues 235–248 are compositionally biased toward basic residues; sequence RGGRGKGKLKKRNA. Residues 341–510 form the tr-type G domain; that stretch reads SRAPVVTVMG…LLQAEVLELK (170 aa). The segment at 350 to 357 is G1; the sequence is GHVDHGKT. Residue 350–357 coordinates GTP; the sequence is GHVDHGKT. A G2 region spans residues 375–379; sequence GITQH. Residues 396–399 form a G3 region; it reads DTPG. Residues 396–400 and 450–453 contribute to the GTP site; these read DTPGH and NKID. Residues 450–453 form a G4 region; it reads NKID. The G5 stretch occupies residues 486-488; it reads SAK.

It belongs to the TRAFAC class translation factor GTPase superfamily. Classic translation factor GTPase family. IF-2 subfamily.

Its subcellular location is the cytoplasm. One of the essential components for the initiation of protein synthesis. Protects formylmethionyl-tRNA from spontaneous hydrolysis and promotes its binding to the 30S ribosomal subunits. Also involved in the hydrolysis of GTP during the formation of the 70S ribosomal complex. The polypeptide is Translation initiation factor IF-2 (Pseudomonas syringae pv. syringae (strain B728a)).